The sequence spans 359 residues: UDP-N-acetylglucosamine--N-acetylmuramyl-(pentapeptide) pyrophosphoryl-undecaprenol N-acetylglucosamine transferase (359 aa).

UDP-N-acetyl-alpha-D-glucosamine-binding positions include 15–17 (TGG), asparagine 127, arginine 166, serine 191, isoleucine 245, 264–269 (ALTVSE), and glutamine 290.

Belongs to the glycosyltransferase 28 family. MurG subfamily.

It is found in the cell inner membrane. The catalysed reaction is di-trans,octa-cis-undecaprenyl diphospho-N-acetyl-alpha-D-muramoyl-L-alanyl-D-glutamyl-meso-2,6-diaminopimeloyl-D-alanyl-D-alanine + UDP-N-acetyl-alpha-D-glucosamine = di-trans,octa-cis-undecaprenyl diphospho-[N-acetyl-alpha-D-glucosaminyl-(1-&gt;4)]-N-acetyl-alpha-D-muramoyl-L-alanyl-D-glutamyl-meso-2,6-diaminopimeloyl-D-alanyl-D-alanine + UDP + H(+). It functions in the pathway cell wall biogenesis; peptidoglycan biosynthesis. Functionally, cell wall formation. Catalyzes the transfer of a GlcNAc subunit on undecaprenyl-pyrophosphoryl-MurNAc-pentapeptide (lipid intermediate I) to form undecaprenyl-pyrophosphoryl-MurNAc-(pentapeptide)GlcNAc (lipid intermediate II). In Pseudomonas entomophila (strain L48), this protein is UDP-N-acetylglucosamine--N-acetylmuramyl-(pentapeptide) pyrophosphoryl-undecaprenol N-acetylglucosamine transferase.